The sequence spans 110 residues: Large ribosomal subunit protein uL22 (110 aa).

Belongs to the universal ribosomal protein uL22 family. Part of the 50S ribosomal subunit.

Functionally, this protein binds specifically to 23S rRNA; its binding is stimulated by other ribosomal proteins, e.g. L4, L17, and L20. It is important during the early stages of 50S assembly. It makes multiple contacts with different domains of the 23S rRNA in the assembled 50S subunit and ribosome. Its function is as follows. The globular domain of the protein is located near the polypeptide exit tunnel on the outside of the subunit, while an extended beta-hairpin is found that lines the wall of the exit tunnel in the center of the 70S ribosome. This Teredinibacter turnerae (strain ATCC 39867 / T7901) protein is Large ribosomal subunit protein uL22.